Reading from the N-terminus, the 215-residue chain is Large ribosomal subunit protein uL3 (215 aa).

Glutamine 153 bears the N5-methylglutamine mark.

The protein belongs to the universal ribosomal protein uL3 family. In terms of assembly, part of the 50S ribosomal subunit. Forms a cluster with proteins L14 and L19. Methylated by PrmB.

Functionally, one of the primary rRNA binding proteins, it binds directly near the 3'-end of the 23S rRNA, where it nucleates assembly of the 50S subunit. The sequence is that of Large ribosomal subunit protein uL3 from Nitrosococcus oceani (strain ATCC 19707 / BCRC 17464 / JCM 30415 / NCIMB 11848 / C-107).